Here is a 217-residue protein sequence, read N- to C-terminus: Imidazole glycerol phosphate synthase subunit HisH (217 aa).

The region spanning 5–217 is the Glutamine amidotransferase type-1 domain; it reads RVGIINYGVG…LRLLANFLTL (213 aa). Residue Cys93 is the Nucleophile of the active site. Active-site residues include His199 and Glu201.

In terms of assembly, heterodimer of HisH and HisF.

The protein resides in the cytoplasm. The enzyme catalyses 5-[(5-phospho-1-deoxy-D-ribulos-1-ylimino)methylamino]-1-(5-phospho-beta-D-ribosyl)imidazole-4-carboxamide + L-glutamine = D-erythro-1-(imidazol-4-yl)glycerol 3-phosphate + 5-amino-1-(5-phospho-beta-D-ribosyl)imidazole-4-carboxamide + L-glutamate + H(+). The catalysed reaction is L-glutamine + H2O = L-glutamate + NH4(+). It functions in the pathway amino-acid biosynthesis; L-histidine biosynthesis; L-histidine from 5-phospho-alpha-D-ribose 1-diphosphate: step 5/9. Its function is as follows. IGPS catalyzes the conversion of PRFAR and glutamine to IGP, AICAR and glutamate. The HisH subunit catalyzes the hydrolysis of glutamine to glutamate and ammonia as part of the synthesis of IGP and AICAR. The resulting ammonia molecule is channeled to the active site of HisF. In Helicobacter hepaticus (strain ATCC 51449 / 3B1), this protein is Imidazole glycerol phosphate synthase subunit HisH.